An 834-amino-acid chain; its full sequence is Probable phosphoenolpyruvate synthase (834 aa).

The active-site Tele-phosphohistidine intermediate is His447. Residues Arg550, Arg598, Glu699, Gly720, Ser721, Asn722, and Asp723 each contribute to the substrate site. Glu699 provides a ligand contact to Mg(2+). Residue Asp723 participates in Mg(2+) binding. Cys772 functions as the Proton donor in the catalytic mechanism.

This sequence belongs to the PEP-utilizing enzyme family. Homooligomer. Forms a large complex of about 2000 kDa. Requires Mg(2+) as cofactor. Post-translationally, the N-terminus is blocked.

The catalysed reaction is pyruvate + ATP + H2O = phosphoenolpyruvate + AMP + phosphate + 2 H(+). The protein operates within carbohydrate biosynthesis; gluconeogenesis. Its function is as follows. Catalyzes the phosphorylation of pyruvate to phosphoenolpyruvate. The polypeptide is Probable phosphoenolpyruvate synthase (ppsA) (Staphylothermus marinus (strain ATCC 43588 / DSM 3639 / JCM 9404 / F1)).